A 274-amino-acid polypeptide reads, in one-letter code: Ribose-5-phosphate isomerase (274 aa).

The protein belongs to the ribose 5-phosphate isomerase family.

The protein resides in the cytoplasm. It carries out the reaction aldehydo-D-ribose 5-phosphate = D-ribulose 5-phosphate. Its pathway is carbohydrate degradation; pentose phosphate pathway; D-ribose 5-phosphate from D-ribulose 5-phosphate (non-oxidative stage): step 1/1. The sequence is that of Ribose-5-phosphate isomerase (rki1) from Schizosaccharomyces pombe (strain 972 / ATCC 24843) (Fission yeast).